We begin with the raw amino-acid sequence, 470 residues long: Cysteine--tRNA ligase (470 aa).

Cys-28 is a Zn(2+) binding site. The 'HIGH' region motif lies at 30–40 (PTVYNYIHIGN). Zn(2+)-binding residues include Cys-212, His-237, and Glu-241. The 'KMSKS' region motif lies at 271 to 275 (KMSKS). Position 274 (Lys-274) interacts with ATP.

The protein belongs to the class-I aminoacyl-tRNA synthetase family. Monomer. Zn(2+) serves as cofactor.

It is found in the cytoplasm. The catalysed reaction is tRNA(Cys) + L-cysteine + ATP = L-cysteinyl-tRNA(Cys) + AMP + diphosphate. The protein is Cysteine--tRNA ligase of Lactiplantibacillus plantarum (strain ATCC BAA-793 / NCIMB 8826 / WCFS1) (Lactobacillus plantarum).